The sequence spans 426 residues: Adenylosuccinate synthetase (426 aa).

GTP contacts are provided by residues 12-18 (GDEGKGK) and 40-42 (GHT). The active-site Proton acceptor is the aspartate 13. 2 residues coordinate Mg(2+): aspartate 13 and glycine 40. IMP-binding positions include 13-16 (DEGK), 38-41 (NAGH), threonine 130, arginine 144, glutamine 224, threonine 239, and arginine 303. Catalysis depends on histidine 41, which acts as the Proton donor. Residue 299-305 (TVTNRVR) coordinates substrate. GTP contacts are provided by residues arginine 305, 331–333 (KLD), and 413–415 (STG).

The protein belongs to the adenylosuccinate synthetase family. In terms of assembly, homodimer. Requires Mg(2+) as cofactor.

It is found in the cytoplasm. It carries out the reaction IMP + L-aspartate + GTP = N(6)-(1,2-dicarboxyethyl)-AMP + GDP + phosphate + 2 H(+). Its pathway is purine metabolism; AMP biosynthesis via de novo pathway; AMP from IMP: step 1/2. Plays an important role in the de novo pathway of purine nucleotide biosynthesis. Catalyzes the first committed step in the biosynthesis of AMP from IMP. This chain is Adenylosuccinate synthetase, found in Anaplasma marginale (strain St. Maries).